Consider the following 178-residue polypeptide: FMN reductase (NADH) RutF (178 aa).

The protein belongs to the non-flavoprotein flavin reductase family. RutF subfamily.

The enzyme catalyses FMNH2 + NAD(+) = FMN + NADH + 2 H(+). In terms of biological role, catalyzes the reduction of FMN to FMNH2 which is used to reduce pyrimidine by RutA via the Rut pathway. The protein is FMN reductase (NADH) RutF of Pseudomonas syringae pv. syringae (strain B728a).